The following is a 294-amino-acid chain: ATP synthase gamma chain (294 aa).

The protein belongs to the ATPase gamma chain family. As to quaternary structure, F-type ATPases have 2 components, CF(1) - the catalytic core - and CF(0) - the membrane proton channel. CF(1) has five subunits: alpha(3), beta(3), gamma(1), delta(1), epsilon(1). CF(0) has three main subunits: a, b and c.

The protein localises to the cell inner membrane. Produces ATP from ADP in the presence of a proton gradient across the membrane. The gamma chain is believed to be important in regulating ATPase activity and the flow of protons through the CF(0) complex. The chain is ATP synthase gamma chain from Mesorhizobium japonicum (strain LMG 29417 / CECT 9101 / MAFF 303099) (Mesorhizobium loti (strain MAFF 303099)).